Here is a 196-residue protein sequence, read N- to C-terminus: GTP cyclohydrolase 1 (196 aa).

The Zn(2+) site is built by cysteine 86, histidine 89, and cysteine 157.

It belongs to the GTP cyclohydrolase I family. As to quaternary structure, toroid-shaped homodecamer, composed of two pentamers of five dimers.

It carries out the reaction GTP + H2O = 7,8-dihydroneopterin 3'-triphosphate + formate + H(+). It functions in the pathway cofactor biosynthesis; 7,8-dihydroneopterin triphosphate biosynthesis; 7,8-dihydroneopterin triphosphate from GTP: step 1/1. This is GTP cyclohydrolase 1 from Parabacteroides distasonis (strain ATCC 8503 / DSM 20701 / CIP 104284 / JCM 5825 / NCTC 11152).